Reading from the N-terminus, the 156-residue chain is MAKKKSKSPGTLAENRKARHDYNIEDTIEAGIALRGTEIKSIRRGSANLKDSFAQVRRGEMYLNNMHIAPYEEGNRFNHDPLRTRKLLLHKKEIQKLGERTREIGYSIIPLKLYLKHGQCKVLLGVARGKKKYDKRQALKEKAVKRDIDRAVKARY.

The protein belongs to the SmpB family.

The protein resides in the cytoplasm. Its function is as follows. Required for rescue of stalled ribosomes mediated by trans-translation. Binds to transfer-messenger RNA (tmRNA), required for stable association of tmRNA with ribosomes. tmRNA and SmpB together mimic tRNA shape, replacing the anticodon stem-loop with SmpB. tmRNA is encoded by the ssrA gene; the 2 termini fold to resemble tRNA(Ala) and it encodes a 'tag peptide', a short internal open reading frame. During trans-translation Ala-aminoacylated tmRNA acts like a tRNA, entering the A-site of stalled ribosomes, displacing the stalled mRNA. The ribosome then switches to translate the ORF on the tmRNA; the nascent peptide is terminated with the 'tag peptide' encoded by the tmRNA and targeted for degradation. The ribosome is freed to recommence translation, which seems to be the essential function of trans-translation. The sequence is that of SsrA-binding protein from Staphylococcus epidermidis (strain ATCC 35984 / DSM 28319 / BCRC 17069 / CCUG 31568 / BM 3577 / RP62A).